A 281-amino-acid polypeptide reads, in one-letter code: NADPH-dependent 7-cyano-7-deazaguanine reductase (281 aa).

88 to 90 (IES) is a binding site for substrate. Residue 90-91 (SK) coordinates NADPH. Catalysis depends on Cys189, which acts as the Thioimide intermediate. Catalysis depends on Asp196, which acts as the Proton donor. 228–229 (HE) is a substrate binding site. 257–258 (RG) is an NADPH binding site.

The protein belongs to the GTP cyclohydrolase I family. QueF type 2 subfamily. Homodimer.

The protein resides in the cytoplasm. The catalysed reaction is 7-aminomethyl-7-carbaguanine + 2 NADP(+) = 7-cyano-7-deazaguanine + 2 NADPH + 3 H(+). It participates in tRNA modification; tRNA-queuosine biosynthesis. Its function is as follows. Catalyzes the NADPH-dependent reduction of 7-cyano-7-deazaguanine (preQ0) to 7-aminomethyl-7-deazaguanine (preQ1). The chain is NADPH-dependent 7-cyano-7-deazaguanine reductase from Sodalis glossinidius (strain morsitans).